Reading from the N-terminus, the 441-residue chain is 3-phosphoshikimate 1-carboxyvinyltransferase (441 aa).

The segment covering Met-1 to Ser-10 has biased composition (polar residues). The interval Met-1–Gly-21 is disordered. The 3-phosphoshikimate site is built by Lys-29, Ser-30, and Arg-34. Lys-29 is a binding site for phosphoenolpyruvate. Positions 103 and 132 each coordinate phosphoenolpyruvate. Positions 177, 179, 328, and 355 each coordinate 3-phosphoshikimate. Gln-179 lines the phosphoenolpyruvate pocket. Catalysis depends on Asp-328, which acts as the Proton acceptor. Positions 359 and 401 each coordinate phosphoenolpyruvate.

Belongs to the EPSP synthase family. As to quaternary structure, monomer.

It localises to the cytoplasm. The enzyme catalyses 3-phosphoshikimate + phosphoenolpyruvate = 5-O-(1-carboxyvinyl)-3-phosphoshikimate + phosphate. Its pathway is metabolic intermediate biosynthesis; chorismate biosynthesis; chorismate from D-erythrose 4-phosphate and phosphoenolpyruvate: step 6/7. Functionally, catalyzes the transfer of the enolpyruvyl moiety of phosphoenolpyruvate (PEP) to the 5-hydroxyl of shikimate-3-phosphate (S3P) to produce enolpyruvyl shikimate-3-phosphate and inorganic phosphate. The polypeptide is 3-phosphoshikimate 1-carboxyvinyltransferase (Prochlorococcus marinus (strain MIT 9303)).